An 87-amino-acid polypeptide reads, in one-letter code: MRHSSLTPRGKSWPCSAPPWPSSRTGWACLPRRCASRRRWRAGRPCSTTRTGPRFARARWIPTTGDRRGRRPQRHRPSTRREQIFSR.

Disordered stretches follow at residues 1–23 (MRHSSLTPRGKSWPCSAPPWPSS) and 61–87 (IPTTGDRRGRRPQRHRPSTRREQIFSR). Positions 68–78 (RGRRPQRHRPS) are enriched in basic residues.

In Escherichia coli, this protein is Putative protein KleG (kleG).